The primary structure comprises 122 residues: Biogenesis of lysosome-related organelles complex 1 subunit CNL1 (122 aa).

The segment covering 1–10 (MQDNSSHSRE) has biased composition (basic and acidic residues). Residues 1-21 (MQDNSSHSRESASAGDDPLGI) form a disordered region. Residues 63 to 95 (ENTIDKNIAKFKELLEKCDTLENHYEMLNQLAI) are a coiled coil.

The protein belongs to the BLOC1S4 family. As to quaternary structure, component of the biogenesis of lysosome-related organelles complex-1 (BLOC-1) composed of at least BLI1, BLS1, CNL1, KXD1, SNN1 and VAB2.

It is found in the cytoplasm. Component of the biogenesis of lysosome-related organelles complex-1 (BLOC-1), a complex that is involved in endosomal cargo sorting. The chain is Biogenesis of lysosome-related organelles complex 1 subunit CNL1 (CLN1) from Saccharomyces cerevisiae (strain RM11-1a) (Baker's yeast).